Consider the following 162-residue polypeptide: Lymphocyte antigen 86 (162 aa).

The N-terminal stretch at 1 to 19 (MNGVAAALLVWILTSPSSS) is a signal peptide. Intrachain disulfides connect Cys-33/Cys-58, Cys-45/Cys-154, and Cys-102/Cys-112. An N-linked (GlcNAc...) asparagine glycan is attached at Asn-96. N-linked (GlcNAc...) asparagine glycosylation occurs at Asn-156.

In terms of assembly, M-shaped tetramer of two CD180-LY86 heterodimers. As to expression, highly expressed in spleen, liver, brain and thymus, and at lower levels in kidney.

The protein resides in the secreted. It is found in the extracellular space. In terms of biological role, may cooperate with CD180 and TLR4 to mediate the innate immune response to bacterial lipopolysaccharide (LPS) and cytokine production. Important for efficient CD180 cell surface expression. This Mus musculus (Mouse) protein is Lymphocyte antigen 86 (Ly86).